A 99-amino-acid chain; its full sequence is NADH-quinone oxidoreductase subunit K (99 aa).

3 consecutive transmembrane segments (helical) span residues 2-22 (PVEYYLWLAAILFGIGLLGVL), 28-48 (LILMMSVELMLNAANLTFLAF), and 60-80 (IAFFVIAVAAAEAAVGLAVVI).

Belongs to the complex I subunit 4L family. In terms of assembly, NDH-1 is composed of 14 different subunits. Subunits NuoA, H, J, K, L, M, N constitute the membrane sector of the complex.

It is found in the cell inner membrane. It catalyses the reaction a quinone + NADH + 5 H(+)(in) = a quinol + NAD(+) + 4 H(+)(out). Its function is as follows. NDH-1 shuttles electrons from NADH, via FMN and iron-sulfur (Fe-S) centers, to quinones in the respiratory chain. The immediate electron acceptor for the enzyme in this species is believed to be ubiquinone. Couples the redox reaction to proton translocation (for every two electrons transferred, four hydrogen ions are translocated across the cytoplasmic membrane), and thus conserves the redox energy in a proton gradient. The sequence is that of NADH-quinone oxidoreductase subunit K from Anaeromyxobacter dehalogenans (strain 2CP-1 / ATCC BAA-258).